Here is a 641-residue protein sequence, read N- to C-terminus: Tetracycline resistance protein TetQ (641 aa).

The region spanning 1–244 (MNIINLGILA…AITSFILPPA (244 aa)) is the tr-type G domain. GTP is bound by residues 10–17 (AHIDAGKT), 74–78 (DTPGH), and 128–131 (NKID).

Belongs to the TRAFAC class translation factor GTPase superfamily. Classic translation factor GTPase family. TetM/TetO subfamily.

Functionally, abolishes the inhibitory effect of tetracyclin on protein synthesis by a non-covalent modification of the ribosomes. The sequence is that of Tetracycline resistance protein TetQ (tetQ) from Xylanibacter ruminicola (Prevotella ruminicola).